The chain runs to 437 residues: D-aminoacyl-tRNA deacylase (437 aa).

It belongs to the DtdA deacylase family. Monomer. It depends on Zn(2+) as a cofactor.

It catalyses the reaction a D-aminoacyl-tRNA + H2O = a tRNA + a D-alpha-amino acid + H(+). The enzyme catalyses glycyl-tRNA(Ala) + H2O = tRNA(Ala) + glycine + H(+). Its function is as follows. D-aminoacyl-tRNA deacylase with broad substrate specificity. By recycling D-aminoacyl-tRNA to D-amino acids and free tRNA molecules, this enzyme counteracts the toxicity associated with the formation of D-aminoacyl-tRNA entities in vivo. This chain is D-aminoacyl-tRNA deacylase, found in Methanoculleus marisnigri (strain ATCC 35101 / DSM 1498 / JR1).